A 304-amino-acid chain; its full sequence is Phosphatidylglycerol--prolipoprotein diacylglyceryl transferase (304 aa).

The next 4 membrane-spanning stretches (helical) occupy residues 18-38 (LGPF…LIGL), 58-78 (LLPI…VAFE), 106-126 (IWGG…AVLI), and 133-153 (QAFW…QAIG). A 1,2-diacyl-sn-glycero-3-phospho-(1'-sn-glycerol) is bound at residue Arg-154. Transmembrane regions (helical) follow at residues 195-215 (PTFL…IVLF), 221-241 (GLLK…YSLG), and 268-288 (IAQL…WWLY).

The protein belongs to the Lgt family.

The protein localises to the cell inner membrane. It carries out the reaction L-cysteinyl-[prolipoprotein] + a 1,2-diacyl-sn-glycero-3-phospho-(1'-sn-glycerol) = an S-1,2-diacyl-sn-glyceryl-L-cysteinyl-[prolipoprotein] + sn-glycerol 1-phosphate + H(+). It functions in the pathway protein modification; lipoprotein biosynthesis (diacylglyceryl transfer). Its function is as follows. Catalyzes the transfer of the diacylglyceryl group from phosphatidylglycerol to the sulfhydryl group of the N-terminal cysteine of a prolipoprotein, the first step in the formation of mature lipoproteins. The chain is Phosphatidylglycerol--prolipoprotein diacylglyceryl transferase from Prochlorococcus marinus (strain MIT 9303).